Consider the following 205-residue polypeptide: Protein-L-isoaspartate O-methyltransferase (205 aa).

Ser56 is an active-site residue.

It belongs to the methyltransferase superfamily. L-isoaspartyl/D-aspartyl protein methyltransferase family.

Its subcellular location is the cytoplasm. The catalysed reaction is [protein]-L-isoaspartate + S-adenosyl-L-methionine = [protein]-L-isoaspartate alpha-methyl ester + S-adenosyl-L-homocysteine. In terms of biological role, catalyzes the methyl esterification of L-isoaspartyl residues in peptides and proteins that result from spontaneous decomposition of normal L-aspartyl and L-asparaginyl residues. It plays a role in the repair and/or degradation of damaged proteins. The sequence is that of Protein-L-isoaspartate O-methyltransferase from Pyrobaculum aerophilum (strain ATCC 51768 / DSM 7523 / JCM 9630 / CIP 104966 / NBRC 100827 / IM2).